The chain runs to 421 residues: Testin (421 aa).

One can recognise a PET domain in the interval 92-199; the sequence is MILTNPVAAK…GDVKLPCEMD (108 aa). The segment at 133 to 164 is disordered; it reads EKQPVAGSEGAQYRKKQLAKQLPAHDQDPSKC. Over residues 155–164 the composition is skewed to basic and acidic residues; the sequence is PAHDQDPSKC. LIM zinc-binding domains are found at residues 234–297, 299–359, and 362–421; these read YSCY…CDSE, PRCA…NHAV, and QGCH…KMMS.

It belongs to the prickle / espinas / testin family. In terms of assembly, interacts via LIM domain 1 with ZYX. Interacts (via LIM domain 3) with ENAH and VASP. Interacts with ALKBH4, talin, actin, alpha-actinin, GRIP1 and PXN. Interacts (via LIM domain 2) with ACTL7A (via N-terminus). Heterodimer with ACTL7A; the heterodimer interacts with ENAH to form a heterotrimer.

It is found in the cytoplasm. It localises to the cell junction. The protein resides in the focal adhesion. Its function is as follows. Scaffold protein that may play a role in cell adhesion, cell spreading and in the reorganization of the actin cytoskeleton. Plays a role in the regulation of cell proliferation. May act as a tumor suppressor. The polypeptide is Testin (TES) (Colobus guereza (Mantled guereza)).